Reading from the N-terminus, the 279-residue chain is Tryptophan synthase alpha chain (279 aa).

Catalysis depends on proton acceptor residues glutamate 50 and aspartate 61.

This sequence belongs to the TrpA family. As to quaternary structure, tetramer of two alpha and two beta chains.

The catalysed reaction is (1S,2R)-1-C-(indol-3-yl)glycerol 3-phosphate + L-serine = D-glyceraldehyde 3-phosphate + L-tryptophan + H2O. It participates in amino-acid biosynthesis; L-tryptophan biosynthesis; L-tryptophan from chorismate: step 5/5. Its function is as follows. The alpha subunit is responsible for the aldol cleavage of indoleglycerol phosphate to indole and glyceraldehyde 3-phosphate. This Brucella melitensis biotype 1 (strain ATCC 23456 / CCUG 17765 / NCTC 10094 / 16M) protein is Tryptophan synthase alpha chain.